Here is a 500-residue protein sequence, read N- to C-terminus: Probable serine carboxypeptidase CPVL (500 aa).

Residues methionine 1–serine 23 form the signal peptide. Asparagine 110 and asparagine 161 each carry an N-linked (GlcNAc...) asparagine glycan. Serine 233 is an active-site residue. 2 N-linked (GlcNAc...) asparagine glycosylation sites follow: asparagine 333 and asparagine 360. Catalysis depends on residues aspartate 414 and histidine 474.

This sequence belongs to the peptidase S10 family.

It is found in the secreted. Functionally, may be involved in the digestion of phagocytosed particles in the lysosome, participation in an inflammatory protease cascade, and trimming of peptides for antigen presentation. The protein is Probable serine carboxypeptidase CPVL (cpvl) of Dictyostelium discoideum (Social amoeba).